We begin with the raw amino-acid sequence, 224 residues long: uncharacterized protein (224 aa).

The next 6 helical transmembrane spans lie at M25–F45, I54–I74, I91–F111, F119–L139, I142–I162, and H174–F194.

The protein resides in the cell membrane. This is an uncharacterized protein from Mycoplasma genitalium (strain ATCC 33530 / DSM 19775 / NCTC 10195 / G37) (Mycoplasmoides genitalium).